A 263-amino-acid chain; its full sequence is MTPIKVVVHGASGKMGQEVLKTLCQENNLHPVGAVDIRAENPAMALPDGSGSIPYSADLSSILSQTKPDVMVDFTVAKASMPAVRIAAAHKVNLVIGTTGFSPEEISEIEQLAKTNDIGIILAPNFALGAIIMVHLAQVASRFLSSAEVIELHHDKKLDSPSGTALVTVASMLEARGEAFNKPPKENLTDARGQEHDGIRVHSVRLPGLLAHQEVIFGAAGQTLTIRHDAFSRECYMPGVLLAIKEIVHTKGFVFGLDKLLKL.

10–15 (GASGKM) is an NAD(+) binding site. Arg38 contacts NADP(+). NAD(+) contacts are provided by residues 97-99 (GTT) and 123-126 (APNF). The active-site Proton donor/acceptor is His153. His154 provides a ligand contact to (S)-2,3,4,5-tetrahydrodipicolinate. Lys157 (proton donor) is an active-site residue. 163 to 164 (GT) provides a ligand contact to (S)-2,3,4,5-tetrahydrodipicolinate.

The protein belongs to the DapB family.

Its subcellular location is the cytoplasm. The catalysed reaction is (S)-2,3,4,5-tetrahydrodipicolinate + NAD(+) + H2O = (2S,4S)-4-hydroxy-2,3,4,5-tetrahydrodipicolinate + NADH + H(+). The enzyme catalyses (S)-2,3,4,5-tetrahydrodipicolinate + NADP(+) + H2O = (2S,4S)-4-hydroxy-2,3,4,5-tetrahydrodipicolinate + NADPH + H(+). It participates in amino-acid biosynthesis; L-lysine biosynthesis via DAP pathway; (S)-tetrahydrodipicolinate from L-aspartate: step 4/4. Functionally, catalyzes the conversion of 4-hydroxy-tetrahydrodipicolinate (HTPA) to tetrahydrodipicolinate. In Dehalococcoides mccartyi (strain ATCC BAA-2100 / JCM 16839 / KCTC 5957 / BAV1), this protein is 4-hydroxy-tetrahydrodipicolinate reductase.